An 827-amino-acid chain; its full sequence is SID1 transmembrane family member 1 (827 aa).

A signal peptide spans 1 to 19 (MRGCLRLALLCALPWLLLA). The Extracellular portion of the chain corresponds to 20 to 309 (ASPGHPAKSP…SIKESVYVKS (290 aa)). N-linked (GlcNAc...) asparagine glycosylation is found at N57, N67, N83, N136, and N282. A helical transmembrane segment spans residues 310–330 (SLFSVFIFLSFYLGCLLVGFV). Residues 331–442 (HYLRFQRKSI…DRRIVSKKYK (112 aa)) lie on the Cytoplasmic side of the membrane. Residues 355–408 (ASHPIAASTPEGSNYGTIDESSSSPGRQMSSSDGGPPGQSDTDSSVEESDFDTM) are disordered. Over residues 364–374 (PEGSNYGTIDE) the composition is skewed to polar residues. Residues 375-397 (SSSSPGRQMSSSDGGPPGQSDTD) are compositionally biased toward low complexity. Positions 398-408 (SSVEESDFDTM) are enriched in acidic residues. A helical transmembrane segment spans residues 443–463 (IYFWNIITIAVFYALPVIQLV). The Extracellular portion of the chain corresponds to 464-494 (ITYQTVVNVTGNQDICYYNFLCAHPLGVLSA). The N-linked (GlcNAc...) asparagine glycan is linked to N471. The helical transmembrane segment at 495–515 (FNNILSNLGHVLLGFLFLLIV) threads the bilayer. Over 516-541 (LRRDILHRRALEAKDIFAVEYGIPKH) the chain is Cytoplasmic. The chain crosses the membrane as a helical span at residues 542-562 (FGLFYAMGIALMMEGVLSACY). The Extracellular portion of the chain corresponds to 563-572 (HVCPNYSNFQ). N567 is a glycosylation site (N-linked (GlcNAc...) asparagine). The helical transmembrane segment at 573–590 (FDTSFMYMIAGLCMLKLY) threads the bilayer. Over 591–600 (QTRHPDINAS) the chain is Cytoplasmic. Residues 601 to 621 (AYSAYASFAVVIMVTVLGVVF) traverse the membrane as a helical segment. At 622–626 (GKNDV) the chain is on the extracellular side. A helical membrane pass occupies residues 627–647 (WFWVIFSAIHVLASLALSTQI). At 648–683 (YYMGRFKIDLGIFRRAAMVFYTDCIQQCSRPLYMDR) the chain is on the cytoplasmic side. Residues 684 to 704 (MVLLVVGNLVNWSFALFGLIY) form a helical membrane-spanning segment. Topologically, residues 705–710 (RPRDFA) are extracellular. A helical transmembrane segment spans residues 711 to 731 (SYMLGIFICNLLLYLAFYIIM). At 732–741 (KLRSSEKVLP) the chain is on the cytoplasmic side. A helical transmembrane segment spans residues 742-762 (VPLFCIVATAVMWAAALYFFF). At 763-791 (QNLSSWEGTPAESREKNRECILLDFFDDH) the chain is on the extracellular side. Residue N764 is glycosylated (N-linked (GlcNAc...) asparagine). Residues 792-812 (DIWHFLSATALFFSFLVLLTL) form a helical membrane-spanning segment. Residues 813–827 (DDDLDVVRRDQIPVF) are Cytoplasmic-facing.

It belongs to the SID1 family.

It localises to the membrane. In vitro binds long double-stranded RNA (dsRNA) (500 and 700 base pairs), but not dsRNA shorter than 300 bp. Not involved in RNA autophagy, a process in which RNA is directly imported into lysosomes in an ATP-dependent manner, and degraded. The sequence is that of SID1 transmembrane family member 1 (SIDT1) from Homo sapiens (Human).